A 576-amino-acid polypeptide reads, in one-letter code: Laccase-1 (576 aa).

Residues 1 to 19 form the signal peptide; sequence MARTTFLVSVSLFVSAVLA. Plastocyanin-like domains lie at 21–145 and 157–304; these read TVEY…LVIY and VDDE…LVYE. An N-linked (GlcNAc...) asparagine glycan is attached at Asn41. Cu cation is bound by residues His82, His84, His127, and His129. A disulfide bond links Cys103 and Cys562. 4 N-linked (GlcNAc...) asparagine glycosylation sites follow: Asn182, Asn228, Asn294, and Asn368. One can recognise a Plastocyanin-like 3 domain in the interval 376 to 576; sequence DESKLVPLEY…NWLKSNPGQL (201 aa). Residues His471, His474, His476, His523, Cys524, His525, and His529 each coordinate Cu cation.

The protein belongs to the multicopper oxidase family. In terms of assembly, homodimer. Cu cation is required as a cofactor. In mycelia, at a lower level than LCC4.

Its subcellular location is the secreted. It carries out the reaction 4 hydroquinone + O2 = 4 benzosemiquinone + 2 H2O. Functionally, lignin degradation and detoxification of lignin-derived products. The chain is Laccase-1 (LCC1) from Thanatephorus cucumeris (Black scurf of potato).